Consider the following 150-residue polypeptide: UPF0260 protein VIBHAR_03078 (150 aa).

The protein belongs to the UPF0260 family.

This chain is UPF0260 protein VIBHAR_03078, found in Vibrio campbellii (strain ATCC BAA-1116).